The primary structure comprises 374 residues: GDSL esterase/lipase At3g50400 (374 aa).

Positions 1 to 26 are cleaved as a signal peptide; it reads MKKSIFFVPVLVLFFFGSRFSRVASA. Residue serine 41 is the Nucleophile of the active site. N-linked (GlcNAc...) asparagine glycosylation is found at asparagine 104 and asparagine 125. Active-site residues include aspartate 339 and histidine 342.

Belongs to the 'GDSL' lipolytic enzyme family.

It localises to the secreted. The sequence is that of GDSL esterase/lipase At3g50400 from Arabidopsis thaliana (Mouse-ear cress).